Reading from the N-terminus, the 183-residue chain is MSKRDNLYLVGLMGAGKTTVGRLLAKHYGCTFYDSDHEIEARTGVKIPVIFEIEGEAGFRRREEAVIAELTTLSGIVLATGGGAVLSPANREHLRTNGLVIYLRGSPEQLCERTRNDRNRPLLQTGNPLAKLRELYQQRDPIYRELADVTVDTARQSVAGMTRVLYGKLDLLKGEATSFDPAG.

14–19 (GAGKTT) serves as a coordination point for ATP. Thr-18 provides a ligand contact to Mg(2+). Asp-36, Arg-60, and Gly-82 together coordinate substrate. Residue Arg-120 coordinates ATP. Arg-139 contributes to the substrate binding site. Gln-156 is an ATP binding site.

It belongs to the shikimate kinase family. Monomer. Mg(2+) serves as cofactor.

Its subcellular location is the cytoplasm. The catalysed reaction is shikimate + ATP = 3-phosphoshikimate + ADP + H(+). The protein operates within metabolic intermediate biosynthesis; chorismate biosynthesis; chorismate from D-erythrose 4-phosphate and phosphoenolpyruvate: step 5/7. Functionally, catalyzes the specific phosphorylation of the 3-hydroxyl group of shikimic acid using ATP as a cosubstrate. The polypeptide is Shikimate kinase (Thiobacillus denitrificans (strain ATCC 25259 / T1)).